Here is a 540-residue protein sequence, read N- to C-terminus: GMP synthase [glutamine-hydrolyzing] (540 aa).

A Glutamine amidotransferase type-1 domain is found at isoleucine 26–threonine 216. Cysteine 103 (nucleophile) is an active-site residue. Catalysis depends on residues histidine 190 and glutamate 192. One can recognise a GMPS ATP-PPase domain in the interval tryptophan 217–arginine 415. Serine 244 to serine 250 lines the ATP pocket.

In terms of assembly, homodimer.

It catalyses the reaction XMP + L-glutamine + ATP + H2O = GMP + L-glutamate + AMP + diphosphate + 2 H(+). The protein operates within purine metabolism; GMP biosynthesis; GMP from XMP (L-Gln route): step 1/1. Catalyzes the synthesis of GMP from XMP. This is GMP synthase [glutamine-hydrolyzing] from Nostoc sp. (strain PCC 7120 / SAG 25.82 / UTEX 2576).